Reading from the N-terminus, the 377-residue chain is Nitric oxide reductase FlRd-NAD(+) reductase (377 aa).

This sequence belongs to the FAD-dependent oxidoreductase family. Requires FAD as cofactor.

The protein resides in the cytoplasm. The enzyme catalyses 2 reduced [nitric oxide reductase rubredoxin domain] + NAD(+) + H(+) = 2 oxidized [nitric oxide reductase rubredoxin domain] + NADH. It functions in the pathway nitrogen metabolism; nitric oxide reduction. One of at least two accessory proteins for anaerobic nitric oxide (NO) reductase. Reduces the rubredoxin moiety of NO reductase. The chain is Nitric oxide reductase FlRd-NAD(+) reductase from Escherichia coli O139:H28 (strain E24377A / ETEC).